The primary structure comprises 511 residues: Phospho-2-dehydro-3-deoxyheptonate aldolase 2, chloroplastic (511 aa).

The protein belongs to the class-II DAHP synthase family. Leaves, stems, tuber and roots.

The protein localises to the plastid. Its subcellular location is the chloroplast. It catalyses the reaction D-erythrose 4-phosphate + phosphoenolpyruvate + H2O = 7-phospho-2-dehydro-3-deoxy-D-arabino-heptonate + phosphate. Its pathway is metabolic intermediate biosynthesis; chorismate biosynthesis; chorismate from D-erythrose 4-phosphate and phosphoenolpyruvate: step 1/7. This chain is Phospho-2-dehydro-3-deoxyheptonate aldolase 2, chloroplastic (SHKB), found in Solanum tuberosum (Potato).